A 721-amino-acid chain; its full sequence is MKHIALLTTLLLSASLQAVEKPYDYVFFENSLMKGDYFYSQAKYTSPSWIKNARHHLPVAGSVAFTPGNSLELTYVSAPGGDWYSEIQYCPVRGNDFFREPSTLSMQVRLRESMNAAALPNIAIRYADSTYTQYLNLRNYLKDTRPGVWHPVSIPLEDFGLNAVNDTNIKKLAAVALRPGTADGNEYTIYLDDIELLPASLPSVSALNAPVLQEAKAYERHIDIKWIPQSKEDIKYYRIYRSFDGITYQPVAVRRPWMNRYTDFLGEVGKKAYYKVTAVDYALNESNDSQTVSATTYPMTDEQLLDMVQEANFRYYWEGAEPNSGLARENIPGRNDMIATGASGFGIMAIVAGIERGFITREEGVQRFLKITSFLEKADKFHGAVSHFIDGTTGKTVAFFGPKDNGGDLVETSFLFQGLLTARQYFNQENDKEKQIRKSIDNLWKNVEWSWYKQFKDSPYLYWHWSPDQAWVINHKLIGWNETMITYMLAIMGPKYGISPEMYYSGWASQEEYAQEYRADWGRVEDGKMYTNGNTYYGENLKVGVSNGGPLFFIHYSYLGLDPHKFTDKYTNYFENNQKMAKINQRYCIENQGGYVGYGEDCWGLTASDFAWNYQAQEPMPHRDNGTMAPTGALASFPYTPDASMKALRNYYRNHGSFLWGEYGFRDAFNLTVNWVSPLFMGLNQAPVTVMIENYRTNLLWNLFMSHPDVQKGIQKIQSIK.

Residues 1-18 (MKHIALLTTLLLSASLQA) form the signal peptide. One can recognise a Glycoamylase-like domain in the interval 474–708 (NHKLIGWNET…LLWNLFMSHP (235 aa)).

In terms of assembly, monomer.

The protein localises to the periplasm. It catalyses the reaction [(1-&gt;2)-beta-D-glucosyl](n) + H2O = [(1-&gt;2)-beta-D-glucosyl](n-2) + sophorose. Catalyzes the hydrolysis of linear beta-1,2-glucan and beta-1,2-glucooligosaccharides with degrees of polymerization (DPs) greater than or equal to 4, to produce sophorose. The best substrates are tetra- and pentasaccharides. Acts as an exo-type enzyme that releases sophorose from the non-reducing end of the substrate. It cannot hydrolyze cyclic beta-1,2-glucans. The protein is Exo beta-1,2-glucooligosaccharide sophorohydrolase (non-reducing end) of Parabacteroides distasonis (strain ATCC 8503 / DSM 20701 / CIP 104284 / JCM 5825 / NCTC 11152).